The following is a 257-amino-acid chain: tRNA (guanine-N(1)-)-methyltransferase (257 aa).

S-adenosyl-L-methionine contacts are provided by residues glycine 112 and 136–141; that span reads LGDYVL.

It belongs to the RNA methyltransferase TrmD family. In terms of assembly, homodimer.

Its subcellular location is the cytoplasm. The enzyme catalyses guanosine(37) in tRNA + S-adenosyl-L-methionine = N(1)-methylguanosine(37) in tRNA + S-adenosyl-L-homocysteine + H(+). Functionally, specifically methylates guanosine-37 in various tRNAs. The chain is tRNA (guanine-N(1)-)-methyltransferase from Salinispora arenicola (strain CNS-205).